We begin with the raw amino-acid sequence, 205 residues long: GTP cyclohydrolase-2 (205 aa).

Position 49-53 (49-53 (RIHSE)) interacts with GTP. Zn(2+)-binding residues include C54, C65, and C67. Residues Q70, 92–94 (EGR), and T114 contribute to the GTP site. D126 functions as the Proton acceptor in the catalytic mechanism. R128 functions as the Nucleophile in the catalytic mechanism. T149 and K154 together coordinate GTP.

It belongs to the GTP cyclohydrolase II family. Zn(2+) is required as a cofactor.

The catalysed reaction is GTP + 4 H2O = 2,5-diamino-6-hydroxy-4-(5-phosphoribosylamino)-pyrimidine + formate + 2 phosphate + 3 H(+). The protein operates within cofactor biosynthesis; riboflavin biosynthesis; 5-amino-6-(D-ribitylamino)uracil from GTP: step 1/4. In terms of biological role, catalyzes the conversion of GTP to 2,5-diamino-6-ribosylamino-4(3H)-pyrimidinone 5'-phosphate (DARP), formate and pyrophosphate. This chain is GTP cyclohydrolase-2, found in Shewanella amazonensis (strain ATCC BAA-1098 / SB2B).